Reading from the N-terminus, the 355-residue chain is MKRDFRALLNPALERIEAYKVEGGQDAEVKLNQNESPFDLPMWLKDKILDEFRREPWNRYPDILPYRGMATYASFLGVPAESVIMSNGSNEMLYTIFMACVGAGRKVLIPEPSFSLYDKLAVLLQGEIVSVPLNPDLSFDVDAIIAAAEREKVDFIVLSTPNNPAGKSMSHDEVERIVSTCDAIVLADEAYIEFSQQESVVDLIDRYPNLIVLRTMSKALALAGMRIGFAITNPELMAEITKPKIPFASGRLAEITLANVLENYSLVTDAVHYILAERQRMEQELAGIAGVEVFESDTNFLIIRVGNAKEVFTKLREGGVLVRNVSGYPLMQNCLRCNIGLIEENDRLLELLKSC.

Residue K218 is modified to N6-(pyridoxal phosphate)lysine.

The protein belongs to the class-II pyridoxal-phosphate-dependent aminotransferase family. Histidinol-phosphate aminotransferase subfamily. As to quaternary structure, homodimer. Pyridoxal 5'-phosphate is required as a cofactor.

It catalyses the reaction L-histidinol phosphate + 2-oxoglutarate = 3-(imidazol-4-yl)-2-oxopropyl phosphate + L-glutamate. It participates in amino-acid biosynthesis; L-histidine biosynthesis; L-histidine from 5-phospho-alpha-D-ribose 1-diphosphate: step 7/9. This is Histidinol-phosphate aminotransferase from Chlorobaculum parvum (strain DSM 263 / NCIMB 8327) (Chlorobium vibrioforme subsp. thiosulfatophilum).